Consider the following 547-residue polypeptide: Chaperonin GroEL 2 (547 aa).

ATP-binding positions include 29–32 (TLGP), 86–90 (DGTTT), G418, 482–484 (NAA), and D498.

This sequence belongs to the chaperonin (HSP60) family. In terms of assembly, forms a cylinder of 14 subunits composed of two heptameric rings stacked back-to-back. Interacts with the co-chaperonin GroES.

Its subcellular location is the cytoplasm. It carries out the reaction ATP + H2O + a folded polypeptide = ADP + phosphate + an unfolded polypeptide.. Together with its co-chaperonin GroES, plays an essential role in assisting protein folding. The GroEL-GroES system forms a nano-cage that allows encapsulation of the non-native substrate proteins and provides a physical environment optimized to promote and accelerate protein folding. The polypeptide is Chaperonin GroEL 2 (Corynebacterium efficiens (strain DSM 44549 / YS-314 / AJ 12310 / JCM 11189 / NBRC 100395)).